The chain runs to 408 residues: Indian hedgehog protein (408 aa).

Positions 1-23 (MKPARLLLLLSGCALLLAPAVRC) are cleaved as a signal peptide. Cysteine 24 is lipidated: N-palmitoyl cysteine. Ca(2+) is bound by residues glutamate 90, glutamate 91, aspartate 96, threonine 126, glutamate 127, aspartate 130, and aspartate 132. Positions 141, 148, and 183 each coordinate Zn(2+). Glycine 198 carries the Cholesterol glycine ester lipid modification.

It belongs to the hedgehog family. Multimer. In terms of assembly, interacts with BOC and CDON. Interacts with PTCH1. Interacts with glypican GPC3. Post-translationally, cholesterylation is required for N-product targeting to lipid rafts and multimerization. In terms of processing, the C-terminal domain displays an autoproteolysis activity and a cholesterol transferase activity. Both activities result in the cleavage of the full-length protein and covalent attachment of a cholesterol moiety to the C-terminal of the newly generated N-product. The N-product is the active species in both local and long-range signaling, whereas the C-product is degraded in the endoplasmic reticulum. N-palmitoylation by HHAT of N-product is required for indian hedgehog protein N-product multimerization and full activity. In terms of tissue distribution, expressed in developing midgut, lung and cartilage of developing long bones in the limb.

The protein localises to the cell membrane. It is found in the endoplasmic reticulum membrane. It localises to the golgi apparatus membrane. The protein resides in the secreted. It catalyses the reaction glycyl-L-cysteinyl-[protein] + cholesterol + H(+) = [protein]-C-terminal glycyl cholesterol ester + N-terminal L-cysteinyl-[protein]. Its function is as follows. Plays a role in embryonic morphogenesis; it is involved in the regulation of endochondral skeleton formation, and the development of retinal pigment epithelium (RPE), photoreceptors and periocular tissues. In terms of biological role, the C-terminal part of the indian hedgehog protein precursor displays an autoproteolysis and a cholesterol transferase activity. Both activities result in the cleavage of the full-length protein into two parts followed by the covalent attachment of a cholesterol moiety to the C-terminal of the newly generated N-product. Both activities occur in the endoplasmic reticulum. The dually lipidated indian hedgehog protein N-product is a morphogen which is essential for a variety of patterning events during development. Binds to the patched (PTCH1) receptor, which functions in association with smoothened (SMO), to activate the transcription of target genes. Plays a role in morphogenesis of the skeleton by coordinating growth and differentiation of the endochondral skeleton. Positively regulates PTHLH expression during endochondral bone formation preventing chondrocyte hypertrophy. In contrast, participates in normal chondrocyte proliferation in a PTHLH-independent pathway. In Gallus gallus (Chicken), this protein is Indian hedgehog protein.